The chain runs to 438 residues: MYSTNRTSQSLSRKPGRKHQLRSHRYVMPPSLHLSDSAAASVFRAVRLRGPVGRDVIAGSTSLSIATVNRQVIALLEAGLLRERADLAVSGAIGRPRVPVEVNHEPFVTLGIHIGARTTSIVATDLFGRTLDTVETPTPRNAAGAALTSLADSADRYLQRWRRRRALWVGVTLGGAVDSATGHVDHPRLGWRQAPVGPVLADALGLPVSVASHVDAMAGAELMLGMRRFAPSSSTSLYVYARETVGYALMIGGRVHCPASGPGTIAPLPVHSEMLGGTGQLESTVSDEAVLAAARRLRIIPGIASRTRTGGSATAITDLLRVARAGNQQAKELLAERARVLGGAVALLRDLLNPDEVVVGGQAFTEYPEAMEQVEAAFTAGSVLAPRDIRVTVFGNRVQEAGAGIVSLSGLYADPLGALRRSGALDARLQDTAPEALA.

Over residues Met-1–Ser-12 the composition is skewed to polar residues. The interval Met-1–Arg-22 is disordered. The segment at residues Val-52 to Ile-73 is a DNA-binding region (H-T-H motif).

It belongs to the ROK (NagC/XylR) family.

Positively regulates the expression of PE13 and PPE18. This chain is Transcriptional regulator Mb0495, found in Mycobacterium bovis (strain ATCC BAA-935 / AF2122/97).